A 150-amino-acid polypeptide reads, in one-letter code: Transcriptional repressor NrdR (150 aa).

A disordered region spans residues 1–26; it reads MKCPFCGNSDSKVVDSRPDKGGSGIR. The segment at 3 to 34 is a zinc-finger region; that stretch reads CPFCGNSDSKVVDSRPDKGGSGIRRRRECEQC. One can recognise an ATP-cone domain in the interval 49–139; it reads PLVLKKDGRR…VYRSFRDINE (91 aa).

Belongs to the NrdR family. Zn(2+) serves as cofactor.

Its function is as follows. Negatively regulates transcription of bacterial ribonucleotide reductase nrd genes and operons by binding to NrdR-boxes. This chain is Transcriptional repressor NrdR, found in Pelobacter propionicus (strain DSM 2379 / NBRC 103807 / OttBd1).